Reading from the N-terminus, the 406-residue chain is Imidazolonepropionase (406 aa).

Fe(3+)-binding residues include H75 and H77. The Zn(2+) site is built by H75 and H77. 3 residues coordinate 4-imidazolone-5-propanoate: R84, Y147, and H180. Y147 contributes to the N-formimidoyl-L-glutamate binding site. H245 is a binding site for Fe(3+). H245 contacts Zn(2+). Residue Q248 coordinates 4-imidazolone-5-propanoate. Fe(3+) is bound at residue D320. D320 contacts Zn(2+). Residues N322 and G324 each contribute to the N-formimidoyl-L-glutamate site. T325 is a binding site for 4-imidazolone-5-propanoate.

It belongs to the metallo-dependent hydrolases superfamily. HutI family. The cofactor is Zn(2+). Fe(3+) serves as cofactor.

It is found in the cytoplasm. It catalyses the reaction 4-imidazolone-5-propanoate + H2O = N-formimidoyl-L-glutamate. The protein operates within amino-acid degradation; L-histidine degradation into L-glutamate; N-formimidoyl-L-glutamate from L-histidine: step 3/3. Functionally, catalyzes the hydrolytic cleavage of the carbon-nitrogen bond in imidazolone-5-propanoate to yield N-formimidoyl-L-glutamate. It is the third step in the universal histidine degradation pathway. This is Imidazolonepropionase from Hyphomonas neptunium (strain ATCC 15444).